The sequence spans 24 residues: Unknown protein 3 (24 aa).

In Pseudotsuga menziesii (Douglas-fir), this protein is Unknown protein 3.